We begin with the raw amino-acid sequence, 333 residues long: Cytosolic sulfotransferase 10 (333 aa).

76-81 provides a ligand contact to 3'-phosphoadenylyl sulfate; that stretch reads KSGTTW. The Proton acceptor role is filled by histidine 146. 3'-phosphoadenylyl sulfate contacts are provided by residues arginine 168, serine 176, tyrosine 234, and 299-301; that span reads RKG.

It belongs to the sulfotransferase 1 family. Expressed in roots.

Its subcellular location is the cytoplasm. In terms of biological role, sulfotransferase that utilizes 3'-phospho-5'-adenylyl sulfate (PAPS) as sulfonate donor to specifically catalyze the sulfate conjugation of brassinosteroids, including castasterone (CS), brassinolide (BL), related 24-epimers, and the naturally occurring (22R, 23R)-28-homobrassinosteroids. No activity on phenolic acids, desulfo-glucosinolates, flavonoids, steroids, gibberellic acids, cytokinins, phenylpropanoids, hydroxyjasmonates and coumarins. In Arabidopsis thaliana (Mouse-ear cress), this protein is Cytosolic sulfotransferase 10 (SOT10).